Reading from the N-terminus, the 272-residue chain is 3-methyl-2-oxobutanoate hydroxymethyltransferase (272 aa).

Residues D42 and D86 each coordinate Mg(2+). 3-methyl-2-oxobutanoate is bound by residues 42 to 43 (DS), D86, and K116. E118 serves as a coordination point for Mg(2+). The active-site Proton acceptor is the E185.

Belongs to the PanB family. In terms of assembly, homodecamer; pentamer of dimers. Mg(2+) serves as cofactor.

It is found in the cytoplasm. The enzyme catalyses 3-methyl-2-oxobutanoate + (6R)-5,10-methylene-5,6,7,8-tetrahydrofolate + H2O = 2-dehydropantoate + (6S)-5,6,7,8-tetrahydrofolate. The protein operates within cofactor biosynthesis; (R)-pantothenate biosynthesis; (R)-pantoate from 3-methyl-2-oxobutanoate: step 1/2. In terms of biological role, catalyzes the reversible reaction in which hydroxymethyl group from 5,10-methylenetetrahydrofolate is transferred onto alpha-ketoisovalerate to form ketopantoate. The protein is 3-methyl-2-oxobutanoate hydroxymethyltransferase of Prochlorococcus marinus (strain MIT 9303).